The following is a 170-amino-acid chain: Alpha-crystallin A chain (170 aa).

The residue at position 1 (Met1) is an N-acetylmethionine. Residues 1–63 (MDVTIQQPWF…RTALDSGISE (63 aa)) are required for complex formation with BFSP1 and BFSP2. Gln6 is subject to Deamidated glutamine; partial. Ser45 is subject to Phosphoserine. A Deamidated glutamine; partial modification is found at Gln50. The 110-residue stretch at 52–161 (LFRTALDSGI…SERPIPVSRE (110 aa)) folds into the sHSP domain. 2 positions are modified to N6-acetyllysine: Lys70 and Lys99. Zn(2+) is bound at residue His100. Residue Asn101 is modified to Deamidated asparagine; partial. Glu102, His107, and His151 together coordinate Zn(2+). The interval 144-170 (PKIVDPSHSERPIPVSREEKPSSAPSS) is disordered. The span at 148–164 (DPSHSERPIPVSREEKP) shows a compositional bias: basic and acidic residues. O-linked (GlcNAc) serine glycosylation occurs at Ser159.

The protein belongs to the small heat shock protein (HSP20) family. As to quaternary structure, heteromer composed of three CRYAA and one CRYAB subunits. Inter-subunit bridging via zinc ions enhances stability, which is crucial as there is no protein turn over in the lens. Can also form homodimers and homotetramers (dimers of dimers) which serve as the building blocks of homooligomers. Within homooligomers, the zinc-binding motif is created from residues of 3 different molecules. His-100 and Glu-102 from one molecule are ligands of the zinc ion, and His-107 and His-151 residues from additional molecules complete the site with tetrahedral coordination geometry. Part of a complex required for lens intermediate filament formation composed of BFSP1, BFSP2 and CRYAA. Post-translationally, acetylation at Lys-70 may increase chaperone activity. Undergoes age-dependent proteolytical cleavage at the C-terminus.

It is found in the cytoplasm. It localises to the nucleus. Contributes to the transparency and refractive index of the lens. Acts as a chaperone, preventing aggregation of various proteins under a wide range of stress conditions. Required for the correct formation of lens intermediate filaments as part of a complex composed of BFSP1, BFSP2 and CRYAA. This chain is Alpha-crystallin A chain (CRYAA), found in Bradypus variegatus (Brown-throated three-fingered sloth).